The primary structure comprises 341 residues: Methionine import ATP-binding protein MetN 1 (341 aa).

The ABC transporter domain maps to 2–241 (IEFRQVSKTF…PKTTIAQNFV (240 aa)). ATP is bound at residue 38-45 (GYSGAGKS).

It belongs to the ABC transporter superfamily. Methionine importer (TC 3.A.1.24) family. The complex is composed of two ATP-binding proteins (MetN), two transmembrane proteins (MetI) and a solute-binding protein (MetQ).

The protein localises to the cell membrane. It carries out the reaction L-methionine(out) + ATP + H2O = L-methionine(in) + ADP + phosphate + H(+). The enzyme catalyses D-methionine(out) + ATP + H2O = D-methionine(in) + ADP + phosphate + H(+). Functionally, part of the ABC transporter complex MetNIQ involved in methionine import. Responsible for energy coupling to the transport system. The chain is Methionine import ATP-binding protein MetN 1 from Staphylococcus aureus (strain MW2).